The sequence spans 522 residues: Glutamyl-tRNA(Gln) amidotransferase subunit A (522 aa).

Catalysis depends on charge relay system residues Lys-88 and Ser-163. Ser-187 serves as the catalytic Acyl-ester intermediate.

Belongs to the amidase family. GatA subfamily. Heterotrimer of A, B and C subunits.

The enzyme catalyses L-glutamyl-tRNA(Gln) + L-glutamine + ATP + H2O = L-glutaminyl-tRNA(Gln) + L-glutamate + ADP + phosphate + H(+). Allows the formation of correctly charged Gln-tRNA(Gln) through the transamidation of misacylated Glu-tRNA(Gln) in organisms which lack glutaminyl-tRNA synthetase. The reaction takes place in the presence of glutamine and ATP through an activated gamma-phospho-Glu-tRNA(Gln). The sequence is that of Glutamyl-tRNA(Gln) amidotransferase subunit A from Paenarthrobacter aurescens (strain TC1).